Here is a 1392-residue protein sequence, read N- to C-terminus: Leucine-rich PPR motif-containing protein, mitochondrial (1392 aa).

The N-terminal 59 residues, 1 to 59 (MAALLRPARWLLGAAAAPRLPLSLRLPAGVPGRLSSVVRVAAVGSRPAAGERLSQARLY), are a transit peptide targeting the mitochondrion. PPR repeat units follow at residues 125 to 159 (LLRS…GVVY), 160 to 194 (DVSH…NIQP), 195 to 229 (NRVT…DLPI), 230 to 264 (TEAV…GIEP), 265 to 299 (GPDT…DHYF), 300 to 334 (MDRD…RRSI), 402 to 436 (HSSS…GFPI), 437 to 471 (RPHY…GVDP), 677 to 708 (VGSA…ESDM), 709 to 745 (VIGG…SAIL), 746 to 783 (DTAK…IKDA), 784 to 820 (TVLS…AKPS), 821 to 856 (SNIS…VLPR), and 953 to 987 (RDQM…NIIP). Residues Lys-151, Lys-186, and Lys-225 each carry the N6-acetyllysine modification. Lys-291 is modified (N6-acetyllysine). N6-acetyllysine is present on Lys-462. At Lys-749 the chain carries N6-acetyllysine. Positions 931–1050 (ASNQVEALEK…NCKLKKSKDA (120 aa)) are RNA-binding. Residues Ser-1025, Ser-1026, and Ser-1028 each carry the phosphoserine modification. 6 PPR repeats span residues 1030–1064 (GEDV…NVVF), 1065–1101 (SSET…GFTL), 1102–1136 (NDAA…KQVP), 1137–1175 (SQIA…LSKM), 1176–1210 (VFIN…QAIE), and 1315–1349 (NDKV…NLKL). Position 1137 is a phosphoserine (Ser-1137).

Component of mRNP complexes associated with HNRPA1. Component of the complex, at least composed of LRPPRC, BECN1 and BCL2; the interactions prevent BECN1 from forming an autophagy-inducing complex with PIK3C3. Interacts with CECR2, HEBP2, MAP1S and UXT. Interacts with PPARGC1A. Interacts with FOXO1. Interacts (via N-terminus) with EIF4E; the interaction promotes association of EIF4E with 4ESE-containing mRNAs. Interacts with exportin XPO1/CRM1; interacts both alone and in complex with EIF4E and 4ESE-containing mRNAs to form an EIF4E-dependent mRNA export complex. Interacts with importin IPO8; the interaction occurs when LRPPRC is in its RNA-free form and returns LRPPRC to the nucleus for further export rounds. Interacts with BECN1. In terms of tissue distribution, strongly expressed in heart, liver and kidney. Weakly expressed in brain, skeletal muscle and testes.

Its subcellular location is the mitochondrion. The protein resides in the nucleus. The protein localises to the nucleoplasm. It is found in the nucleus inner membrane. It localises to the nucleus outer membrane. Its function is as follows. May play a role in RNA metabolism in both nuclei and mitochondria. In the nucleus binds to HNRPA1-associated poly(A) mRNAs and is part of nmRNP complexes at late stages of mRNA maturation which are possibly associated with nuclear mRNA export. Positively modulates nuclear export of mRNAs containing the EIF4E sensitivity element (4ESE) by binding simultaneously to both EIF4E and the 4ESE and acting as a platform for assembly for the RNA export complex. Also binds to exportin XPO1/CRM1 to engage the nuclear pore and traffic the bound mRNAs to the cytoplasm. May bind mature mRNA in the nucleus outer membrane. In mitochondria binds to poly(A) mRNA. Plays a role in translation or stability of mitochondrially encoded cytochrome c oxidase (COX) subunits. May be involved in transcription regulation. Cooperates with PPARGC1A to regulate certain mitochondrially encoded genes and gluconeogenic genes and may regulate docking of PPARGC1A to transcription factors. Seems to be involved in the transcription regulation of the multidrug-related genes MDR1 and MVP. Part of a nuclear factor that binds to the invMED1 element of MDR1 and MVP gene promoters. Binds single-stranded DNA. Required for maintaining mitochondrial potential. Suppresses the initiation of basal levels of autophagy and mitophagy by sustaining BCL2 levels. The protein is Leucine-rich PPR motif-containing protein, mitochondrial (Lrpprc) of Mus musculus (Mouse).